Consider the following 242-residue polypeptide: Stress response regulator protein 1 (242 aa).

The Response regulatory domain maps to 118–236 (NFLLVDDNFI…FDHIITCIEK (119 aa)). A 4-aspartylphosphate modification is found at aspartate 169.

Its function is as follows. Required for stress adaptation, morphogenesis and virulence. The sequence is that of Stress response regulator protein 1 (SRR1) from Debaryomyces hansenii (strain ATCC 36239 / CBS 767 / BCRC 21394 / JCM 1990 / NBRC 0083 / IGC 2968) (Yeast).